The following is a 682-amino-acid chain: MNTFFRLTALAGLLALAGQSFAVEDITRADQIPVLKEETQHATVSERVTSRFTRSHYRQFDLDEAFSAKIFDRYLNLLDYSHNVLLASDVEQFAKKKTVLGDELRTGKLDVFYDLYNLAQKRRFERYQYALKVLERPMDFTGNDTFNLDRSKAPWPKDEAELNALWDGKVKFDELSLKLTGKSDKEIRETLTRRYKFAIRRLAQTNSEDVFSLAMTAFAREIDPHTNYLSPRNTEQFNTEMSLSLEGIGAVLQMDDDYTVINSLVAGGPAAKSKSISVGDRIVGVGQAGKPMVDVIGWRLDDVVALIKGPKGSKVRLEILPAGKGTKTRIITLTRERIRLEDRAVKMSVKTVGKEKVGVLDIPGFYVGLTDDVKVQLQKLEKQNVNSIVIDLRSNGGGALTEAVSLSGLFIPSGPIVQVRDNNGKVREDSDTDGVVYYKGPLVVLVDRFSASASEIFAAAMQDYGRALIVGEPTFGKGTVQQYRSLNRIYDQMLRPEWPALGSVQYTIQKFYRVNGGSTQRKGVTPDIIMPTGNEETETGEKFEDNALPWDSIDAAKYVKSDDLAPFGPELLKEHNARIAKDPEFQYIMKDIARFNAMKDKRNIVSLNYAQREKENNEEDALRLARINDRFKREGKPLLKKLDDLPKDYQEPDPYLDETVKIALDLAHLEKEKPAEQAAANK.

An N-terminal signal peptide occupies residues 1-22 (MNTFFRLTALAGLLALAGQSFA). The region spanning 238–322 (NTEMSLSLEG…SKVRLEILPA (85 aa)) is the PDZ domain. Catalysis depends on charge relay system residues S452, D463, and K477.

It belongs to the peptidase S41A family.

The protein localises to the cell inner membrane. The catalysed reaction is The enzyme shows specific recognition of a C-terminal tripeptide, Xaa-Yaa-Zaa, in which Xaa is preferably Ala or Leu, Yaa is preferably Ala or Tyr, and Zaa is preferably Ala, but then cleaves at a variable distance from the C-terminus. A typical cleavage is -Ala-Ala-|-Arg-Ala-Ala-Lys-Glu-Asn-Tyr-Ala-Leu-Ala-Ala.. Its function is as follows. Involved in the cleavage of a C-terminal peptide of 11 residues from the precursor form of penicillin-binding protein 3 (PBP3). May be involved in protection of the bacterium from thermal and osmotic stresses. This is Tail-specific protease (prc) from Salmonella typhimurium (strain LT2 / SGSC1412 / ATCC 700720).